Here is a 162-residue protein sequence, read N- to C-terminus: MGENTSLEKATFGAGCFWHVEEEFRRVPGVVSTLAGYMGGWKEHPTYEEVCSKTTGHAEVVEVTFDPAAVTYDHLLRVFWDCHDPTQLNRQGPDIGTNYRSVIFYHSPDQERAARASLEHEQRSGRHARPIVTEIVPAATFWWAEEYHQHYLEKRGGGSCRW.

Residue C16 is part of the active site.

It belongs to the MsrA Met sulfoxide reductase family.

It catalyses the reaction L-methionyl-[protein] + [thioredoxin]-disulfide + H2O = L-methionyl-(S)-S-oxide-[protein] + [thioredoxin]-dithiol. It carries out the reaction [thioredoxin]-disulfide + L-methionine + H2O = L-methionine (S)-S-oxide + [thioredoxin]-dithiol. Functionally, has an important function as a repair enzyme for proteins that have been inactivated by oxidation. Catalyzes the reversible oxidation-reduction of methionine sulfoxide in proteins to methionine. This chain is Peptide methionine sulfoxide reductase MsrA, found in Geobacter sulfurreducens (strain ATCC 51573 / DSM 12127 / PCA).